The primary structure comprises 159 residues: Ribosome maturation factor RimP (159 aa).

Belongs to the RimP family.

It is found in the cytoplasm. Required for maturation of 30S ribosomal subunits. This is Ribosome maturation factor RimP from Halothermothrix orenii (strain H 168 / OCM 544 / DSM 9562).